The following is a 251-amino-acid chain: 3-deoxy-manno-octulosonate cytidylyltransferase (251 aa).

This sequence belongs to the KdsB family.

It localises to the cytoplasm. It carries out the reaction 3-deoxy-alpha-D-manno-oct-2-ulosonate + CTP = CMP-3-deoxy-beta-D-manno-octulosonate + diphosphate. It participates in nucleotide-sugar biosynthesis; CMP-3-deoxy-D-manno-octulosonate biosynthesis; CMP-3-deoxy-D-manno-octulosonate from 3-deoxy-D-manno-octulosonate and CTP: step 1/1. The protein operates within bacterial outer membrane biogenesis; lipopolysaccharide biosynthesis. Functionally, activates KDO (a required 8-carbon sugar) for incorporation into bacterial lipopolysaccharide in Gram-negative bacteria. This Parabacteroides distasonis (strain ATCC 8503 / DSM 20701 / CIP 104284 / JCM 5825 / NCTC 11152) protein is 3-deoxy-manno-octulosonate cytidylyltransferase.